A 402-amino-acid polypeptide reads, in one-letter code: MRRRLRLRRDALLTLLLGASLGLLLYAQRDGAAPTASAPRGRGRAAPRPTPGPRAFQLPDAGAAPPAYEGDTPAPPTPTGPFDFARYLRAKDQRRFPLLINQPHKCRGDGAPGGRPDLLIAVKSVAEDFERRQAVRQTWGAEGRVQGALVRRVFLLGVPRGAGSGGADEVGEGARTHWRALLRAESLAYADILLWAFDDTFFNLTLKEIHFLAWASAFCPDVRFVFKGDADVFVNVGNLLEFLAPRDPAQDLLAGDVIVHARPIRTRASKYYIPEAVYGLPAYPAYAGGGGFVLSGATLHRLAGACAQVELFPIDDVFLGMCLQRLRLTPEPHPAFRTFGIPQPSAAPHLSTFDPCFYRELVVVHGLSAADIWLMWRLLHGPHGPACAHPQPVAAGPFQWDS.

The Cytoplasmic portion of the chain corresponds to 1–10 (MRRRLRLRRD). A helical; Signal-anchor for type II membrane protein transmembrane segment spans residues 11-27 (ALLTLLLGASLGLLLYA). Residues 28–402 (QRDGAAPTAS…VAAGPFQWDS (375 aa)) lie on the Lumenal side of the membrane. Low complexity predominate over residues 32–47 (AAPTASAPRGRGRAAP). Positions 32–83 (AAPTASAPRGRGRAAPRPTPGPRAFQLPDAGAAPPAYEGDTPAPPTPTGPFD) are disordered.

This sequence belongs to the glycosyltransferase 31 family.

It localises to the golgi apparatus membrane. This Homo sapiens (Human) protein is UDP-GlcNAc:betaGal beta-1,3-N-acetylglucosaminyltransferase 9.